Here is a 520-residue protein sequence, read N- to C-terminus: Zinc finger and BTB domain-containing protein 45 (520 aa).

A BTB domain is found at 33-96 (CDVTVRIREA…LYSGSLVVAQ (64 aa)). Disordered stretches follow at residues 182–272 (PAPP…GGAG) and 337–372 (FHLG…PDAA). Positions 206-225 (RGEEDDDEETDEETDAEEGE) are enriched in acidic residues. Over residues 342–363 (PGPPAPTPPTPSGPAPAPPPTF) the composition is skewed to pro residues. 4 C2H2-type zinc fingers span residues 412 to 434 (YECS…MFIH), 440 to 462 (HQCA…MVTH), 468 to 490 (FQCA…MRTH), and 495 to 517 (APCP…LAAH).

The protein belongs to the krueppel C2H2-type zinc-finger protein family.

The protein resides in the nucleus. Its function is as follows. May be involved in transcriptional regulation. In the central nervous system, may play a role in glial cell differentiation. In Mus musculus (Mouse), this protein is Zinc finger and BTB domain-containing protein 45.